Consider the following 130-residue polypeptide: Ribosome-binding factor A (130 aa).

A disordered region spans residues 111–130; sequence RDLDDVGPEATSSDEDAEQR.

Belongs to the RbfA family. As to quaternary structure, monomer. Binds 30S ribosomal subunits, but not 50S ribosomal subunits or 70S ribosomes.

It is found in the cytoplasm. In terms of biological role, one of several proteins that assist in the late maturation steps of the functional core of the 30S ribosomal subunit. Associates with free 30S ribosomal subunits (but not with 30S subunits that are part of 70S ribosomes or polysomes). Required for efficient processing of 16S rRNA. May interact with the 5'-terminal helix region of 16S rRNA. The sequence is that of Ribosome-binding factor A from Xanthomonas euvesicatoria pv. vesicatoria (strain 85-10) (Xanthomonas campestris pv. vesicatoria).